The sequence spans 213 residues: Phosphatidylcholine transfer protein (213 aa).

Met1 carries the post-translational modification N-acetylmethionine. Residues Met1–Lys212 enclose the START domain. Tyr72 and Arg78 together coordinate a 1,2-diacyl-sn-glycero-3-phosphocholine. A Phosphoserine modification is found at Ser139. Gln157 contacts a 1,2-diacyl-sn-glycero-3-phosphocholine. The interval Val171–Phe176 is part of the binding site for phosphatidylcholine.

In terms of assembly, interacts with ACOT13/THEM2.

The protein localises to the cytoplasm. Catalyzes the transfer of phosphatidylcholine between membranes. Binds phosphatidylcholine in a tight 1:1 stoichiometric complex. This is Phosphatidylcholine transfer protein (PCTP) from Bos taurus (Bovine).